The primary structure comprises 346 residues: tRNA/tmRNA (uracil-C(5))-methyltransferase (346 aa).

S-adenosyl-L-methionine contacts are provided by Gln-168, Tyr-197, Asn-202, Glu-218, and Asp-278. Residue Cys-303 is the Nucleophile of the active site. Glu-337 (proton acceptor) is an active-site residue.

This sequence belongs to the class I-like SAM-binding methyltransferase superfamily. RNA M5U methyltransferase family. TrmA subfamily.

It carries out the reaction uridine(54) in tRNA + S-adenosyl-L-methionine = 5-methyluridine(54) in tRNA + S-adenosyl-L-homocysteine + H(+). The catalysed reaction is uridine(341) in tmRNA + S-adenosyl-L-methionine = 5-methyluridine(341) in tmRNA + S-adenosyl-L-homocysteine + H(+). Its function is as follows. Dual-specificity methyltransferase that catalyzes the formation of 5-methyluridine at position 54 (m5U54) in all tRNAs, and that of position 341 (m5U341) in tmRNA (transfer-mRNA). The polypeptide is tRNA/tmRNA (uracil-C(5))-methyltransferase (Campylobacter lari (strain RM2100 / D67 / ATCC BAA-1060)).